The following is a 519-amino-acid chain: Signal transduction histidine-protein kinase/phosphatase MprB (519 aa).

Topologically, residues 1 to 26 (MVRFAWRRRASLRATSSLSLRWRVML) are cytoplasmic. The helical transmembrane segment at 27-47 (LAMSMVAMVVVLMAFAVYVVI) threads the bilayer. Residues 48-163 (SAALYSDIDN…PTEAVMTKLR (116 aa)) are Extracellular-facing. The helical transmembrane segment at 164–184 (WVLLIVGSLGVAVAAVAGGMV) threads the bilayer. Residues 185-519 (TRAGLRPVGR…SVDYQSARAR (335 aa)) lie on the Cytoplasmic side of the membrane. The HAMP domain occupies 186-238 (RAGLRPVGRLTEAAERVARTDDLRPIPVFGSDELARLTEAFNLMLRALAESRE). One can recognise a Histidine kinase domain in the interval 246–466 (DAGHELRTPL…SIYVLLPGRP (221 aa)). Position 249 is a phosphohistidine; by autocatalysis (His249).

It depends on Mg(2+) as a cofactor. Requires Mn(2+) as cofactor. Autophosphorylated.

The protein localises to the cell membrane. The catalysed reaction is ATP + protein L-histidine = ADP + protein N-phospho-L-histidine.. Its function is as follows. Member of the two-component regulatory system MprB/MprA which contributes to maintaining a balance among several systems involved in stress resistance and is required for establishment and maintenance of persistent infection in the host. In response to environmental signals MprB acts both as a membrane-associated protein kinase that undergoes autophosphorylation and subsequently transfers the phosphate to MprA, and a protein phosphatase that dephosphorylates phospho-MprA. This Mycobacterium leprae (strain TN) protein is Signal transduction histidine-protein kinase/phosphatase MprB (mprB).